Consider the following 952-residue polypeptide: Serine/threonine-protein kinase atg1 (952 aa).

The 307-residue stretch at 23–329 folds into the Protein kinase domain; sequence FTINEQIGKG…FPEYFAHPVV (307 aa). ATP is bound by residues 29–37 and Lys-52; that span reads IGKGSFATV. Catalysis depends on Asp-166, which acts as the Proton acceptor. Disordered stretches follow at residues 331–478, 510–573, 783–806, and 920–952; these read EPIP…EAEQ, GRAN…SSPS, RLPE…GGSS, and AIAK…TPPK. Basic and acidic residues-rich tracts occupy residues 338–347 and 356–372; these read GDDRPKEKSP and SLRD…HIDT. Residues 386-398 show a composition bias toward polar residues; that stretch reads SPRTPNIESNQPF. Residues 429-439 are compositionally biased toward basic and acidic residues; the sequence is PRQRDRKDRTE. 3 stretches are compositionally biased toward polar residues: residues 459–475, 553–573, and 793–806; these read ANLQ…SITE, PDTS…SSPS, and NNRS…GGSS. Low complexity predominate over residues 933–952; sequence SPRRSYSGGTTPTINNTPPK.

This sequence belongs to the protein kinase superfamily. Ser/Thr protein kinase family. APG1/unc-51/ULK1 subfamily. In terms of assembly, homodimer. Forms a ternary complex with ATG13 and ATG17.

The protein localises to the cytoplasm. It is found in the preautophagosomal structure membrane. The catalysed reaction is L-seryl-[protein] + ATP = O-phospho-L-seryl-[protein] + ADP + H(+). It carries out the reaction L-threonyl-[protein] + ATP = O-phospho-L-threonyl-[protein] + ADP + H(+). Its function is as follows. Serine/threonine protein kinase involved in the cytoplasm to vacuole transport (Cvt) and found to be essential in autophagy, where it is required for the formation of autophagosomes. Involved in the clearance of protein aggregates which cannot be efficiently cleared by the proteasome. Required for selective autophagic degradation of the nucleus (nucleophagy) as well as for mitophagy which contributes to regulate mitochondrial quantity and quality by eliminating the mitochondria to a basal level to fulfill cellular energy requirements and preventing excess ROS production. Also involved in endoplasmic reticulum-specific autophagic process, in selective removal of ER-associated degradation (ERAD) substrates. Plays a key role in ATG9 and ATG23 cycling through the pre-autophagosomal structure and is necessary to promote ATG18 binding to ATG9 through phosphorylation of ATG9. Catalyzes phosphorylation of ATG4, decreasing the interaction between ATG4 and ATG8 and impairing deconjugation of PE-conjugated forms of ATG8. This chain is Serine/threonine-protein kinase atg1, found in Botryotinia fuckeliana (strain B05.10) (Noble rot fungus).